The primary structure comprises 792 residues: Ubiquitin carboxyl-terminal hydrolase 10 (792 aa).

At A2 the chain carries N-acetylalanine. Residues 2-99 (ALHNPQYIFG…ILGCTTSKKI (98 aa)) form an interaction with p53/TP53 region. The G3BP1-binding stretch occupies residues 6 to 21 (PQYIFGDFSPDEFNQF). T24 carries the post-translational modification Phosphothreonine. The segment at 126–164 (SNAEAETLENDSGAGGLGQRERKKKKKRPPGYYSYLKDG) is disordered. A phosphoserine mark is found at S208 and S223. The segment covering 300–309 (DEGADLDPAK) has biased composition (basic and acidic residues). Positions 300–323 (DEGADLDPAKPESQSPPAESALSA) are disordered. Residue S314 is modified to Phosphoserine. At S330 the chain carries Phosphoserine; by ATM. The interval 350 to 369 (PMAYVETKCSPPVPSPLASE) is disordered. S359 and S364 each carry phosphoserine. The USP domain occupies 409-789 (RGLINKGNWC…TAYLLYYRRV (381 aa)). The active-site Nucleophile is C418. S541 bears the Phosphoserine mark. Residues 542–580 (PTHEKHSVSNGPRSDLIEDEELEDTGKGSEDEWEQVGPK) are disordered. Phosphothreonine is present on T566. Phosphoserine is present on S570. Catalysis depends on H743, which acts as the Proton acceptor.

Belongs to the peptidase C19 family. USP10 subfamily. In terms of assembly, found in a deubiquitination complex with TANK, USP10 and ZC3H12A; this complex inhibits genotoxic stress- or interleukin-1-beta (IL1B)-mediated NF-kappa-B activation by promoting IKBKG or TRAF6 deubiquitination. Interacts with IKBKG; this interaction increases in response to DNA damage. Interacts with TANK; this interaction increases in response to DNA damage. Interacts with TRAF6; this interaction increases in response to DNA damage. Interacts with ZC3H12A; this interaction increases in response to DNA damage. Interacts with G3BP1 (via NTF2 domain) and G3BP2 (via NTF2 domain); inhibiting stress granule formation. Post-translationally, phosphorylated by ATM following DNA damage, leading to stabilization and translocation it to the nucleus. Ubiquitinated. Deubiquitinated by USP13.

It localises to the cytoplasm. Its subcellular location is the nucleus. It is found in the early endosome. It carries out the reaction Thiol-dependent hydrolysis of ester, thioester, amide, peptide and isopeptide bonds formed by the C-terminal Gly of ubiquitin (a 76-residue protein attached to proteins as an intracellular targeting signal).. Its activity is regulated as follows. Specifically inhibited by spautin-1 (specific and potent autophagy inhibitor-1), a derivative of MBCQ that binds to USP10 and inhibits deubiquitinase activity. Regulated by PIK3C3/VPS34-containing complexes. Hydrolase that can remove conjugated ubiquitin from target proteins such as p53/TP53, RPS2/us5, RPS3/us3, RPS10/eS10, BECN1, SNX3 and CFTR. Acts as an essential regulator of p53/TP53 stability: in unstressed cells, specifically deubiquitinates p53/TP53 in the cytoplasm, leading to counteract MDM2 action and stabilize p53/TP53. Following DNA damage, translocates to the nucleus and deubiquitinates p53/TP53, leading to regulate the p53/TP53-dependent DNA damage response. Component of a regulatory loop that controls autophagy and p53/TP53 levels: mediates deubiquitination of BECN1, a key regulator of autophagy, leading to stabilize the PIK3C3/VPS34-containing complexes. In turn, PIK3C3/VPS34-containing complexes regulate USP10 stability, suggesting the existence of a regulatory system by which PIK3C3/VPS34-containing complexes regulate p53/TP53 protein levels via USP10 and USP13. Does not deubiquitinate MDM2. Plays a key role in 40S ribosome subunit recycling when a ribosome has stalled during translation: acts both by inhibiting formation of stress granules, which store stalled translation pre-initiation complexes, and mediating deubiquitination of 40S ribosome subunits. Acts as a negative regulator of stress granules formation by lowering G3BP1 and G3BP2 valence, thereby preventing G3BP1 and G3BP2 ability to undergo liquid-liquid phase separation (LLPS) and assembly of stress granules. Promotes 40S ribosome subunit recycling following ribosome dissociation in response to ribosome stalling by mediating deubiquitination of 40S ribosomal proteins RPS2/us5, RPS3/us3 and RPS10/eS10, thereby preventing their degradation by the proteasome. Part of a ribosome quality control that takes place when ribosomes have stalled during translation initiation (iRQC): USP10 acts by removing monoubiquitination of RPS2/us5 and RPS3/us3, promoting 40S ribosomal subunit recycling. Deubiquitinates CFTR in early endosomes, enhancing its endocytic recycling. Involved in a TANK-dependent negative feedback response to attenuate NF-kappa-B activation via deubiquitinating IKBKG or TRAF6 in response to interleukin-1-beta (IL1B) stimulation or upon DNA damage. Deubiquitinates TBX21 leading to its stabilization. Plays a negative role in the RLR signaling pathway upon RNA virus infection by blocking the RIGI-mediated MAVS activation. Mechanistically, removes the unanchored 'Lys-63'-linked polyubiquitin chains of MAVS to inhibit its aggregation, essential for its activation. This Mus musculus (Mouse) protein is Ubiquitin carboxyl-terminal hydrolase 10 (Usp10).